Here is a 332-residue protein sequence, read N- to C-terminus: Nicotianamine synthase 1 (332 aa).

This sequence belongs to the nicotianamine synthase (NAS)-like family. Expressed in roots.

It catalyses the reaction 3 S-adenosyl-L-methionine = nicotianamine + 3 S-methyl-5'-thioadenosine + 3 H(+). In terms of biological role, synthesizes nicotianamine, a polyamine that is the first intermediate in the synthesis of the phytosiderophores of the mugineic acid type found in gramineae which serve as a sensor for the physiological iron status within the plant, and/or might be involved in the transport of iron. This is Nicotianamine synthase 1 (NAS1) from Oryza sativa subsp. indica (Rice).